The chain runs to 218 residues: Small ribosomal subunit protein uS3c (218 aa).

Residues 47-118 (VQKNMRTSSG…KLNIAVTRIA (72 aa)) form the KH type-2 domain.

Belongs to the universal ribosomal protein uS3 family. Part of the 30S ribosomal subunit.

The protein localises to the plastid. Its subcellular location is the chloroplast. This Solanum lycopersicum (Tomato) protein is Small ribosomal subunit protein uS3c (rps3).